A 196-amino-acid chain; its full sequence is Elongation factor Ts (196 aa).

Residues 80-83 (TDFV) are involved in Mg(2+) ion dislocation from EF-Tu.

Belongs to the EF-Ts family.

It localises to the cytoplasm. Associates with the EF-Tu.GDP complex and induces the exchange of GDP to GTP. It remains bound to the aminoacyl-tRNA.EF-Tu.GTP complex up to the GTP hydrolysis stage on the ribosome. This chain is Elongation factor Ts, found in Thermus thermophilus (strain ATCC BAA-163 / DSM 7039 / HB27).